The primary structure comprises 87 residues: Small ribosomal subunit protein uS17 (87 aa).

Belongs to the universal ribosomal protein uS17 family. In terms of assembly, part of the 30S ribosomal subunit.

In terms of biological role, one of the primary rRNA binding proteins, it binds specifically to the 5'-end of 16S ribosomal RNA. This is Small ribosomal subunit protein uS17 from Bacillus pumilus (strain SAFR-032).